We begin with the raw amino-acid sequence, 181 residues long: MVDFDALHAIIAPEAEAMGLALVRVAFFGGDSDPTLQVMAERPDTRQLTIDDCADLSRRISDRLDALEEAGQDPIDVAYRLEVSSPGIDRPLTRPADFADWAGHEAKIALKEKLDGRQRFNGTLVGIDGDVVTISDKEGVEHKLPFGAIDTAKLVLTDKLIAATVPLSAEGADEMEEEGQD.

This sequence belongs to the RimP family.

Its subcellular location is the cytoplasm. Required for maturation of 30S ribosomal subunits. The polypeptide is Ribosome maturation factor RimP (Sphingopyxis alaskensis (strain DSM 13593 / LMG 18877 / RB2256) (Sphingomonas alaskensis)).